The chain runs to 191 residues: MADSQDPLHERTRRLLSDYIFFCAREPDTPEPPPTSVEAALLRSVTRQIQQEHQEFFSSFCESRGNRLELVKQMADKLLSKDQDFSWSQLVMLLAFAGTLMNQGPYMAVKQKRDLGNRVIVTRDCCLIVNFLYNLLMGRRHRARLEALGGWDGFCRFFKNPLPLGFWRRLLIQAFLSGFFATAIFFIWKRL.

A BH1 motif is present at residues 79–98 (LSKDQDFSWSQLVMLLAFAG). A Glycyl lysine isopeptide (Lys-Gly) (interchain with G-Cter in ubiquitin) cross-link involves residue Lys-112. The BH2 motif lies at 144–155 (RLEALGGWDGFC). Residues 166-183 (FWRRLLIQAFLSGFFATA) form a helical membrane-spanning segment.

The protein belongs to the Bcl-2 family. As to quaternary structure, interacts with BAX. Interacts with BCL2 and BCL2L1/BCLX. Interacts with APAF1. Interacts with ITPR1, ITPR2 and ITPR3; the interaction with ITPR1 is increased in the presence of AHCLY1. Interacts with AHCYL1. Interacts with HIP1R (via ENTH and I/LWEQ domains). Interacts with CASP9. Interacts with BCL2L11/BIM. Interacts with BIK. Interacts with UBQLN4. Interacts with NME2/NM23-H2. Interacts with PMAIP1/NOXA. Interacts with TPX2. Interacts with UBQLN1; in the cytoplasm. Interacts (via BH1 domain) with BECN1. Ca(2+) serves as cofactor. Post-translationally, monoubiquitinated by UBQLN1; results in stabilization of BCL2L10 protein abundance and in relocalization from mitochondria to cytoplasm. In terms of tissue distribution, expressed in multiple embryonic tissues. Restricted to the ovary and testis in adult mice.

It is found in the mitochondrion. It localises to the nucleus membrane. The protein resides in the endoplasmic reticulum. Its subcellular location is the cytoplasm. The protein localises to the cytoskeleton. It is found in the spindle. Its function is as follows. Promotes cell survival by suppressing apoptosis induced by BAX but not BAK. Increases binding of AHCYL1/IRBIT to ITPR1. Reduces ITPR1-mediated calcium release from the endoplasmic reticulum cooperatively with AHCYL1/IRBIT under normal cellular conditions. Under apoptotic stress conditions, dissociates from ITPR1 and is displaced from mitochondria-associated endoplasmic reticulum membranes, leading to increased Ca(2+) transfer to mitochondria which promotes apoptosis. Required for the correct formation of the microtubule organizing center during oocyte cell division, potentially via regulation of protein abundance and localization of other microtubule organizing center components such as AURKA and TPX2. In Mus musculus (Mouse), this protein is Bcl-2-like protein 10.